A 536-amino-acid chain; its full sequence is Chaperonin GroEL (536 aa).

ATP contacts are provided by residues 30 to 33 (TLGP), 86 to 90 (DGTTT), G414, and D494.

This sequence belongs to the chaperonin (HSP60) family. Forms a cylinder of 14 subunits composed of two heptameric rings stacked back-to-back. Interacts with the co-chaperonin GroES.

It is found in the cytoplasm. The enzyme catalyses ATP + H2O + a folded polypeptide = ADP + phosphate + an unfolded polypeptide.. Together with its co-chaperonin GroES, plays an essential role in assisting protein folding. The GroEL-GroES system forms a nano-cage that allows encapsulation of the non-native substrate proteins and provides a physical environment optimized to promote and accelerate protein folding. This Methanosarcina barkeri (strain Fusaro / DSM 804) protein is Chaperonin GroEL.